Reading from the N-terminus, the 280-residue chain is Putative S-adenosyl-L-methionine-dependent methyltransferase FRAAL3836 (280 aa).

Residues Asp-121 and 150-151 contribute to the S-adenosyl-L-methionine site; that span reads DL.

Belongs to the UPF0677 family.

Functionally, exhibits S-adenosyl-L-methionine-dependent methyltransferase activity. This chain is Putative S-adenosyl-L-methionine-dependent methyltransferase FRAAL3836, found in Frankia alni (strain DSM 45986 / CECT 9034 / ACN14a).